The sequence spans 3828 residues: Histone-lysine N-methyltransferase trithorax (3828 aa).

3 disordered regions span residues 25–179, 356–390, and 512–589; these read EDEA…AAAA, AVKSSGSSPNPNHNPNAVAGSTSAAAPGAPTATKQ, and FRKQ…RSTR. Low complexity predominate over residues 29 to 57; it reads ASAAAAAAAATAATTEQHQQSEQSAGSSA. Positions 77–89 are enriched in polar residues; sequence AATSGNRGASSGA. Positions 101–114 are enriched in low complexity; sequence GNGSSTGSKTTNGG. Acidic residues predominate over residues 152-165; the sequence is DGTEDTNNDDDDDS. A compositionally biased stretch (low complexity) spans 359–387; the sequence is SSGSSPNPNHNPNAVAGSTSAAAPGAPTA. Residues 513-523 are compositionally biased toward basic and acidic residues; sequence RKQEPQHKTPE. Residues 524–553 show a composition bias toward acidic residues; it reads DNDDDGSASSDAIEDDEDIDDDDAEENEEA. The segment covering 554–581 has biased composition (basic and acidic residues); that stretch reads ASEKSAETTASVDEKEADDRQLVMDKHF. The segment at residues 725–839 is a DNA-binding region (nuclear receptor); the sequence is ASTCAVCSAP…AGHRSRLSAI (115 aa). 3 disordered regions span residues 933–1036, 1075–1094, and 1131–1170; these read ESKE…SAVP, ELAAAEAGPAPTTTTTTTSP, and AQPAVKSVLESRSSKSNTQTEAKKTPATSGSSKGKVTTRN. A compositionally biased stretch (basic and acidic residues) spans 960-974; that stretch reads AKQDKEKARELEAEK. Low complexity-rich tracts occupy residues 998–1022 and 1078–1094; these read ASTTTTVSAASSSTSHTSSAATNSS and AAEAGPAPTTTTTTTSP. Polar residues predominate over residues 1140-1170; that stretch reads ESRSSKSNTQTEAKKTPATSGSSKGKVTTRN. PHD-type zinc fingers lie at residues 1251-1334, 1335-1380, and 1408-1469; these read RALC…CTVC, YTCN…CLKC, and GNFC…CARR. One can recognise a Bromo domain in the interval 1483 to 1644; it reads AVMEEFKSSL…SEQFPWFQNE (162 aa). The C2HC pre-PHD-type zinc-finger motif lies at 1708–1748; it reads TRVCLFCRKSGEGLSGEEARLLYCGHDCWVHINCAMWSAEV. The PHD-type 4 zinc finger occupies 1769-1816; sequence IKCTVCGNRGATVGCNVKSCGEHYHYPCARTIDCAFLTDKSMYCPAHA. The 58-residue stretch at 1856–1913 folds into the FYR N-terminal domain; that stretch reads KVQFHIGSVAVRQLGSIVPRFSDSFEAIVPINFLCSRLYWSSKEPWKIVEYTVRTTIQ. Disordered regions lie at residues 2252–2272, 2464–2510, 2826–2848, 2897–2973, 2988–3031, 3117–3178, 3314–3338, and 3457–3487; these read CEPMSTSESESETATGTAQLS, AHQK…QQQQ, RNTNANKSPISVLSKVQPQPQQS, RQQQ…SPAA, APAP…QLSM, ASAN…VPAG, NGSGGGAAEGIGQVDDAEEDEDDDD, and KLDVPQQQPDTVPPNVVPTAAAPQQPPPMRD. 3 stretches are compositionally biased toward low complexity: residues 2253–2268, 2483–2510, and 2836–2848; these read EPMSTSESESETATGT, QGQQQQQRHQQHQQHQQHQQQQQQQQQQ, and SVLSKVQPQPQQS. Residues 2897-2917 are compositionally biased toward polar residues; it reads RQQQANELKNKQAAGQQTGST. 4 stretches are compositionally biased toward low complexity: residues 2956 to 2973, 2988 to 2997, 3005 to 3031, and 3117 to 3132; these read ATSAASMQHHQQQQSPAA, APAPQPQQQE, LHQQQQQQQQQQQHMQQHQQQQQQLSM, and ASANNSSNSNVTQQNS. Residues 3148 to 3164 show a composition bias toward polar residues; the sequence is QQRQEPTPLSNDVVVQS. Positions 3328-3338 are enriched in acidic residues; sequence DDAEEDEDDDD. The FYR C-terminal domain maps to 3493–3577; that stretch reads GPHLLYEIQS…EKCVKYTPKY (85 aa). Residues 3690–3806 enclose the SET domain; sequence DYVGVFRSHI…QGEELTYDYK (117 aa). S-adenosyl-L-methionine-binding positions include His-3700, Arg-3702, Tyr-3744, and 3767-3768; that span reads NH. Residues Cys-3770, Cys-3816, Cys-3818, and Cys-3823 each coordinate Zn(2+). The Post-SET domain maps to 3812–3828; that stretch reads EKIPCSCGSKRCRKYLN.

The protein belongs to the class V-like SAM-binding methyltransferase superfamily. Histone-lysine methyltransferase family. TRX/MLL subfamily. As to quaternary structure, interacts with ash1 via its SET domain.

It localises to the nucleus. The catalysed reaction is L-lysyl(9)-[histone H3] + 3 S-adenosyl-L-methionine = N(6),N(6),N(6)-trimethyl-L-lysyl(9)-[histone H3] + 3 S-adenosyl-L-homocysteine + 3 H(+). Histone methyltransferase that methylates 'Lys-4' of histone H3 (H3K4me). H3K4me represents a specific tag for epigenetic transcriptional activation. Functions in segment determination through interaction with genes of bithorax (BX-C) and antennapedia (ANT-C) complexes. Acts as an activator of BX-C. Involved in the very early regulation of homeotic genes expressed only in the posterior region of the embryo. In Drosophila virilis (Fruit fly), this protein is Histone-lysine N-methyltransferase trithorax (trx).